Consider the following 517-residue polypeptide: uncharacterized protein (517 aa).

3 disordered regions span residues 16-148 (KDES…TITK), 156-175 (VNKE…NTTT), and 216-351 (KLEK…EENE). Low complexity predominate over residues 48-75 (NNNNNNNNTTTTNNNTNNSNTSTSNNSK). Over residues 84-112 (FDDDDDDGDEEDEEEEDDDDDDDDDDDET) the composition is skewed to acidic residues. The span at 127–143 (QPQPQPQPQPQPQPPIK) shows a compositional bias: pro residues. Residues 236-252 (VSSTLSNSFDPNIIHNQ) are compositionally biased toward polar residues. Over residues 254-266 (SPPPPPISIPIPL) the composition is skewed to pro residues. Composition is skewed to low complexity over residues 271–320 (NLNN…NSNI) and 327–347 (SSSM…SNNN). The stretch at 340 to 452 (DNSSSNNNEE…HQNQQNSMNN (113 aa)) forms a coiled coil.

It belongs to the ENTR1 family.

This is an uncharacterized protein from Dictyostelium discoideum (Social amoeba).